The primary structure comprises 678 residues: DNA ligase (678 aa).

Residues 47–51, 96–97, and glutamate 122 each bind NAD(+); these read DSDYD and SL. Catalysis depends on lysine 124, which acts as the N6-AMP-lysine intermediate. Residues arginine 145, glutamate 182, lysine 300, and lysine 324 each contribute to the NAD(+) site. Residues cysteine 418, cysteine 421, cysteine 436, and cysteine 442 each contribute to the Zn(2+) site. The BRCT domain occupies 602–678; sequence AYNESFTGKT…ILEDNLKDLL (77 aa).

This sequence belongs to the NAD-dependent DNA ligase family. LigA subfamily. Requires Mg(2+) as cofactor. Mn(2+) is required as a cofactor.

The catalysed reaction is NAD(+) + (deoxyribonucleotide)n-3'-hydroxyl + 5'-phospho-(deoxyribonucleotide)m = (deoxyribonucleotide)n+m + AMP + beta-nicotinamide D-nucleotide.. DNA ligase that catalyzes the formation of phosphodiester linkages between 5'-phosphoryl and 3'-hydroxyl groups in double-stranded DNA using NAD as a coenzyme and as the energy source for the reaction. It is essential for DNA replication and repair of damaged DNA. The chain is DNA ligase from Francisella tularensis subsp. holarctica (strain FTNF002-00 / FTA).